The following is a 236-amino-acid chain: 1-(5-phosphoribosyl)-5-[(5-phosphoribosylamino)methylideneamino] imidazole-4-carboxamide isomerase (236 aa).

Aspartate 8 functions as the Proton acceptor in the catalytic mechanism. Aspartate 127 functions as the Proton donor in the catalytic mechanism.

The protein belongs to the HisA/HisF family.

It is found in the cytoplasm. It carries out the reaction 1-(5-phospho-beta-D-ribosyl)-5-[(5-phospho-beta-D-ribosylamino)methylideneamino]imidazole-4-carboxamide = 5-[(5-phospho-1-deoxy-D-ribulos-1-ylimino)methylamino]-1-(5-phospho-beta-D-ribosyl)imidazole-4-carboxamide. The protein operates within amino-acid biosynthesis; L-histidine biosynthesis; L-histidine from 5-phospho-alpha-D-ribose 1-diphosphate: step 4/9. In Campylobacter concisus (strain 13826), this protein is 1-(5-phosphoribosyl)-5-[(5-phosphoribosylamino)methylideneamino] imidazole-4-carboxamide isomerase.